The sequence spans 188 residues: Apolipophorin-3 (188 aa).

An N-terminal signal peptide occupies residues 1–17 (MVAKLFVLVACIALSHA). Residues 18–22 (AMVRR) constitute a propeptide that is removed on maturation.

It belongs to the insect apolipophorin-3 family. As to quaternary structure, equilibrium between a soluble monomer and a bound lipoprotein form. Apolipophorin-3 associates with lipophorin during lipid loading until each particle contains 9 or 14 molecules of apolipophorin-3. As to expression, expressed in fat body and secreted in hemolymph. Also expressed in ovary and testis at lower levels.

The protein resides in the secreted. Assists in the loading of diacylglycerol, generated from triacylglycerol stores in the fat body through the action of adipokinetic hormone, into lipophorin, the hemolymph lipoprotein. It increases the lipid carrying capacity of lipophorin by covering the expanding hydrophobic surface resulting from diacylglycerol uptake. It thus plays a critical role in the transport of lipids during flight in several species of insects. The polypeptide is Apolipophorin-3 (Spodoptera litura (Asian cotton leafworm)).